The primary structure comprises 78 residues: Translational regulator CsrA (78 aa).

Belongs to the CsrA/RsmA family. As to quaternary structure, homodimer; the beta-strands of each monomer intercalate to form a hydrophobic core, while the alpha-helices form wings that extend away from the core.

The protein resides in the cytoplasm. A translational regulator that binds mRNA to regulate translation initiation and/or mRNA stability. Usually binds in the 5'-UTR at or near the Shine-Dalgarno sequence preventing ribosome-binding, thus repressing translation. Its main target seems to be the major flagellin gene, while its function is anatagonized by FliW. The sequence is that of Translational regulator CsrA from Geobacter metallireducens (strain ATCC 53774 / DSM 7210 / GS-15).